Here is a 152-residue protein sequence, read N- to C-terminus: Transcriptional repressor NrdR (152 aa).

A zinc finger spans residues 3–34; sequence CPSCQHNGTRVLDSRPVDDGKSIRRRRECESC. In terms of domain architecture, ATP-cone spans 49 to 139; the sequence is LIVVKKEGVR…VYRQFKDINV (91 aa).

It belongs to the NrdR family. The cofactor is Zn(2+).

Functionally, negatively regulates transcription of bacterial ribonucleotide reductase nrd genes and operons by binding to NrdR-boxes. In Bacillus subtilis (strain 168), this protein is Transcriptional repressor NrdR.